Consider the following 46-residue polypeptide: Large ribosomal subunit protein bL36A (46 aa).

The protein belongs to the bacterial ribosomal protein bL36 family.

This Sodalis glossinidius (strain morsitans) protein is Large ribosomal subunit protein bL36A.